A 456-amino-acid chain; its full sequence is UDP-N-acetylmuramoylalanine--D-glutamate ligase (456 aa).

119–125 contributes to the ATP binding site; that stretch reads GSNGKTT.

The protein belongs to the MurCDEF family.

The protein localises to the cytoplasm. The catalysed reaction is UDP-N-acetyl-alpha-D-muramoyl-L-alanine + D-glutamate + ATP = UDP-N-acetyl-alpha-D-muramoyl-L-alanyl-D-glutamate + ADP + phosphate + H(+). It participates in cell wall biogenesis; peptidoglycan biosynthesis. Its function is as follows. Cell wall formation. Catalyzes the addition of glutamate to the nucleotide precursor UDP-N-acetylmuramoyl-L-alanine (UMA). This is UDP-N-acetylmuramoylalanine--D-glutamate ligase from Limosilactobacillus reuteri (strain DSM 20016) (Lactobacillus reuteri).